Here is a 428-residue protein sequence, read N- to C-terminus: C4-dicarboxylate transport protein (428 aa).

Transmembrane regions (helical) follow at residues 8–28 (VLYVQVIFAIVVGVLLGHLYP), 44–64 (LIKMVIGPIIFCTVVTGIAGM), 78–98 (LLYFEIVSTFALVLGLAATHI), 148–168 (GEILQILLIALLFGSVLAHLG), 184–204 (VLFGIVHIVTKLAPVGAFGAM), 222–242 (LIGTFYLTSVVFVLVVLGAIA), 307–327 (IYMTMAVLFIAQATNIELTWM), and 355–375 (AATLAVVPTIPLSGMVLILGI).

It belongs to the dicarboxylate/amino acid:cation symporter (DAACS) (TC 2.A.23) family.

It is found in the cell inner membrane. Its function is as follows. Responsible for the transport of dicarboxylates such as succinate, fumarate, and malate from the periplasm across the membrane. The sequence is that of C4-dicarboxylate transport protein from Burkholderia thailandensis (strain ATCC 700388 / DSM 13276 / CCUG 48851 / CIP 106301 / E264).